A 632-amino-acid polypeptide reads, in one-letter code: Glycerophosphodiester phosphodiesterase domain-containing protein 4 (632 aa).

Over 1–64 (MEETQDSSSS…GSCCCSRKEQ (64 aa)) the chain is Cytoplasmic. A helical transmembrane segment spans residues 65–85 (FFYMCLVIAFILSVLFLFVWV). The Extracellular portion of the chain corresponds to 86-114 (ETSNEYNGFDWVVYLGTGCWFFWSILVLS). The helical transmembrane segment at 115–135 (AAGIMVAYTTLLLLLGFLLLW) threads the bilayer. Topologically, residues 136–147 (ERIELNLHTSHK) are cytoplasmic. A helical transmembrane segment spans residues 148-168 (VFICLVIVLCSFLLAVLSHFW). At 169-180 (KDKWLIAGLSLQ) the chain is on the extracellular side. A helical transmembrane segment spans residues 181–201 (IFAPFVHLSLITVMIIISWPL). Residues 202 to 240 (SICVARLESEVKVRRYRMADYEQEIQERCNVFQRLRALQ) lie on the Cytoplasmic side of the membrane. A helical transmembrane segment spans residues 241–261 (IAAGLSFLIILLCLYLMPLGI). Residues 262 to 542 (YSPCILKKEN…SRPLFFMTPG (281 aa)) lie on the Extracellular side of the membrane. Positions 276 to 533 (PTLFGHRGAP…DNIELLNQLS (258 aa)) constitute a GP-PDE domain. Positions 308, 310, and 323 each coordinate a divalent metal cation. Residues N343, N349, N384, and N473 are each glycosylated (N-linked (GlcNAc...) asparagine). Residues 543–563 (FYMFMWLFLDIASAVIIGFVF) traverse the membrane as a helical segment. Residues 564–632 (CYNWIKEIKR…QKTEPKTENL (69 aa)) are Cytoplasmic-facing. Residues 596–632 (ENNDASQQKPEVAPTSANLAPENMIELQKTEPKTENL) form a disordered region. Residues 623–632 (QKTEPKTENL) show a composition bias toward basic and acidic residues.

It belongs to the glycerophosphoryl diester phosphodiesterase family. As to expression, detected in testis, in particular in spermatocytes.

It is found in the cytoplasm. Its subcellular location is the membrane. The polypeptide is Glycerophosphodiester phosphodiesterase domain-containing protein 4 (Gdpd4) (Mus musculus (Mouse)).